Consider the following 280-residue polypeptide: Diaminopimelate epimerase (280 aa).

The substrate site is built by Asn11 and Asn64. The active-site Proton donor is the Cys73. Residues Gly74 to Asn75, Asn162, Asn195, and Glu213 to Arg214 each bind substrate. The Proton acceptor role is filled by Cys222. Substrate is bound at residue Gly223–Thr224.

The protein belongs to the diaminopimelate epimerase family. In terms of assembly, homodimer.

It localises to the cytoplasm. It carries out the reaction (2S,6S)-2,6-diaminopimelate = meso-2,6-diaminopimelate. The protein operates within amino-acid biosynthesis; L-lysine biosynthesis via DAP pathway; DL-2,6-diaminopimelate from LL-2,6-diaminopimelate: step 1/1. Functionally, catalyzes the stereoinversion of LL-2,6-diaminopimelate (L,L-DAP) to meso-diaminopimelate (meso-DAP), a precursor of L-lysine and an essential component of the bacterial peptidoglycan. The chain is Diaminopimelate epimerase from Pelotomaculum thermopropionicum (strain DSM 13744 / JCM 10971 / SI).